The sequence spans 191 residues: Peptidyl-tRNA hydrolase (191 aa).

Tyr-14 lines the tRNA pocket. His-19 (proton acceptor) is an active-site residue. Tyr-64, Asn-66, and Asn-112 together coordinate tRNA.

The protein belongs to the PTH family. Monomer.

It is found in the cytoplasm. It carries out the reaction an N-acyl-L-alpha-aminoacyl-tRNA + H2O = an N-acyl-L-amino acid + a tRNA + H(+). Functionally, hydrolyzes ribosome-free peptidyl-tRNAs (with 1 or more amino acids incorporated), which drop off the ribosome during protein synthesis, or as a result of ribosome stalling. In terms of biological role, catalyzes the release of premature peptidyl moieties from peptidyl-tRNA molecules trapped in stalled 50S ribosomal subunits, and thus maintains levels of free tRNAs and 50S ribosomes. This is Peptidyl-tRNA hydrolase from Syntrophotalea carbinolica (strain DSM 2380 / NBRC 103641 / GraBd1) (Pelobacter carbinolicus).